The primary structure comprises 197 residues: Glycerol-3-phosphate acyltransferase (197 aa).

A run of 5 helical transmembrane segments spans residues 2 to 22, 53 to 73, 78 to 98, 112 to 132, and 152 to 174; these read LDVILVIIGYLIGSISSAIVV, AGITLLGDWLKGTLPVLLAWL, PVVASAAGLAAFFGHLFPVYF, VILAWSPLALLATVVTWLAVA, and YMLWLSASPVLTAATAILTAAIV.

It belongs to the PlsY family. As to quaternary structure, probably interacts with PlsX.

Its subcellular location is the cell inner membrane. The enzyme catalyses an acyl phosphate + sn-glycerol 3-phosphate = a 1-acyl-sn-glycero-3-phosphate + phosphate. Its pathway is lipid metabolism; phospholipid metabolism. Functionally, catalyzes the transfer of an acyl group from acyl-phosphate (acyl-PO(4)) to glycerol-3-phosphate (G3P) to form lysophosphatidic acid (LPA). This enzyme utilizes acyl-phosphate as fatty acyl donor, but not acyl-CoA or acyl-ACP. The sequence is that of Glycerol-3-phosphate acyltransferase from Halorhodospira halophila (strain DSM 244 / SL1) (Ectothiorhodospira halophila (strain DSM 244 / SL1)).